The chain runs to 125 residues: Small ribosomal subunit protein bS6 (125 aa).

Residues 99 to 125 (PSIMMKSVEREEARKASTEASAPAQAQ) form a disordered region. Over residues 105 to 115 (SVEREEARKAS) the composition is skewed to basic and acidic residues. A compositionally biased stretch (polar residues) spans 116 to 125 (TEASAPAQAQ).

It belongs to the bacterial ribosomal protein bS6 family.

Functionally, binds together with bS18 to 16S ribosomal RNA. This chain is Small ribosomal subunit protein bS6, found in Bordetella petrii (strain ATCC BAA-461 / DSM 12804 / CCUG 43448).